The primary structure comprises 1238 residues: Inner capsid protein VP2 (1238 aa).

The segment at 1 to 35 is disordered; it reads MSTSAKKTPESKTEDKIEPVIEQTSNDKPEPPPNK. The span at 7–30 shows a compositional bias: basic and acidic residues; it reads KTPESKTEDKIEPVIEQTSNDKPE.

Belongs to the turreted BTV-fold inner capsid family. As to quaternary structure, homodecamer; each decamer is made up of two conformers of VP2, called VP2A and VP2B. 12 homodecamers assemble to form an icosahedral capsid.

Its subcellular location is the virion. In terms of biological role, inner capsid protein that self-assembles to form an icosahedral capsid with a T=2 symmetry, which consists of 120 copies of VP2, with channels at each of its five-fold vertices. This capsid constitutes the innermost concentric layer of the viral mature particle. The protein is Inner capsid protein VP2 (S2) of Cryphonectria parasitica (Chestnut blight fungus).